The sequence spans 349 residues: Bifunctional protein FolKE (349 aa).

Residues 1 to 226 are 2-amino-4-hydroxy-6-hydroxymethyldihydropteridine pyrophosphokinase; that stretch reads MQTTYLSMGS…LFEIDSSKTD (226 aa). The tract at residues 226–349 is GTP cyclohydrolase 1; the sequence is DSIVLIKDIP…KRMEFLESLL (124 aa).

In the N-terminal section; belongs to the HPPK family. The protein in the C-terminal section; belongs to the GTP cyclohydrolase I family. In terms of assembly, homomer.

The catalysed reaction is 6-hydroxymethyl-7,8-dihydropterin + ATP = (7,8-dihydropterin-6-yl)methyl diphosphate + AMP + H(+). The enzyme catalyses GTP + H2O = 7,8-dihydroneopterin 3'-triphosphate + formate + H(+). The protein operates within cofactor biosynthesis; 7,8-dihydroneopterin triphosphate biosynthesis; 7,8-dihydroneopterin triphosphate from GTP: step 1/1. It participates in cofactor biosynthesis; tetrahydrofolate biosynthesis; 2-amino-4-hydroxy-6-hydroxymethyl-7,8-dihydropteridine diphosphate from 7,8-dihydroneopterin triphosphate: step 4/4. The chain is Bifunctional protein FolKE (folKE) from Lactococcus lactis subsp. lactis (strain IL1403) (Streptococcus lactis).